Reading from the N-terminus, the 440-residue chain is Beta-1,3-galactosyl-O-glycosyl-glycoprotein beta-1,6-N-acetylglucosaminyltransferase (440 aa).

The Cytoplasmic portion of the chain corresponds to 1 to 12; the sequence is MKMAGWKKKLCR. Residues 13–30 form a helical; Signal-anchor for type II membrane protein membrane-spanning segment; that stretch reads GHHLWALGCYMLLAVVSL. Residues 31–440 are Lumenal-facing; it reads RLSLRFKCDV…RHKAIYGTEL (410 aa). N-linked (GlcNAc...) asparagine; by host glycans are attached at residues Asn-72 and Asn-108. Disulfide bonds link Cys-73/Cys-230, Cys-164/Cys-384, Cys-185/Cys-212, and Cys-393/Cys-425.

The protein belongs to the glycosyltransferase 14 family.

It is found in the host Golgi apparatus membrane. The catalysed reaction is a 3-O-[beta-D-galactosyl-(1-&gt;3)-N-acetyl-alpha-D-galactosaminyl]-L-seryl-[protein] + UDP-N-acetyl-alpha-D-glucosamine = 3-O-{beta-D-galactosyl-(1-&gt;3)-[N-acetyl-beta-D-glucosaminyl-(1-&gt;6)]-N-acetyl-alpha-D-galactosaminyl}-L-seryl-[protein] + UDP + H(+). The enzyme catalyses a 3-O-[beta-D-galactosyl-(1-&gt;3)-N-acetyl-alpha-D-galactosaminyl]-L-threonyl-[protein] + UDP-N-acetyl-alpha-D-glucosamine = a 3-O-{beta-D-galactosyl-(1-&gt;3)-[N-acetyl-beta-D-glucosaminyl-(1-&gt;6)]-N-acetyl-alpha-D-galactosaminyl}-L-threonyl-[protein] + UDP + H(+). It catalyses the reaction a beta-D-Gal-(1-&gt;4)-beta-D-GlcNAc-(1-&gt;3)-beta-D-Gal-(1-&gt;4)-beta-D-GlcNAc derivative + UDP-N-acetyl-alpha-D-glucosamine = a beta-D-Gal-(1-&gt;4)-beta-D-GlcNAc-(1-&gt;3)-[beta-D-GlcNAc-(1-&gt;6)]-beta-D-Gal-(1-&gt;4)-N-acetyl-beta-D-glucosaminyl derivative + UDP + H(+). It carries out the reaction 3-O-[N-acetyl-beta-D-glucosaminyl-(1-&gt;3)-N-acetyl-alpha-D-galactosaminyl]-L-seryl-[protein] + UDP-N-acetyl-alpha-D-glucosamine = 3-O-[N-acetyl-beta-D-glucosaminyl-(1-&gt;3)-[N-acetyl-beta-D-glucosaminyl-(1-&gt;6)]-N-acetyl-alpha-D-galactosaminyl]-L-seryl-[protein] + UDP + H(+). The catalysed reaction is a 3-O-[N-acetyl-beta-D-glucosaminyl-(1-&gt;3)-N-acetyl-alpha-D-galactosaminyl]-L-threonyl-[protein] + UDP-N-acetyl-alpha-D-glucosamine = 3-O-[N-acetyl-beta-D-glucosaminyl-(1-&gt;3)-[N-acetyl-beta-D-glucosaminyl-(1-&gt;6)]-N-acetyl-alpha-D-galactosaminyl]-L-threonyl-[protein] + UDP + H(+). It functions in the pathway protein modification; protein glycosylation. In terms of biological role, non-essential glycosyltransferase that can synthesize all known mucin beta 6 N-acetylglucosaminides. Mediates core 2 and core 4 O-glycan branching, 2 important steps in mucin-type biosynthesis. Has also I-branching enzyme activity by converting linear into branched poly-N-acetyllactosaminoglycans. Contributes to the post-translational modifications of structural proteins. The protein is Beta-1,3-galactosyl-O-glycosyl-glycoprotein beta-1,6-N-acetylglucosaminyltransferase (Bo17) of Bos taurus (Bovine).